Consider the following 938-residue polypeptide: Chaperone protein ClpD1, chloroplastic (938 aa).

The N-terminal 83 residues, 1-83 (MEVCCCSTSS…FERFTERAVK (83 aa)), are a transit peptide targeting the chloroplast. Repeat regions lie at residues 84-145 (AVVL…TPGA) and 159-224 (FSGS…LQAE). One can recognise a Clp R domain in the interval 84 to 224 (AVVLSQREAK…SVALTRLQAE (141 aa)). Positions 234 to 255 (GASSFKVPKKSPAGAGRSAFSK) are disordered. An i region spans residues 266-519 (LDQFCLDLTT…RMESFNRKKE (254 aa)). Residues 311–318 (GEAGVGKT) and 660–667 (GPTGVGKT) contribute to the ATP site. The tract at residues 586 to 777 (VGTEEIARVA…LIVMTSNIGS (192 aa)) is II.

The protein belongs to the ClpA/ClpB family. ClpD subfamily. As to expression, expressed in stems, culms and leaves.

Its subcellular location is the plastid. The protein resides in the chloroplast. Molecular chaperone that may function in heat stress response. May interact with a ClpP-like protease involved in degradation of denatured proteins in the chloroplast. Chaperone involved in response to abiotic stresses. Plays a positive role during dehydration and salt stress. The chain is Chaperone protein ClpD1, chloroplastic from Oryza sativa subsp. japonica (Rice).